Here is an 84-residue protein sequence, read N- to C-terminus: Cell division topological specificity factor (84 aa).

Belongs to the MinE family.

Functionally, prevents the cell division inhibition by proteins MinC and MinD at internal division sites while permitting inhibition at polar sites. This ensures cell division at the proper site by restricting the formation of a division septum at the midpoint of the long axis of the cell. The polypeptide is Cell division topological specificity factor (Ralstonia nicotianae (strain ATCC BAA-1114 / GMI1000) (Ralstonia solanacearum)).